The primary structure comprises 72 residues: Protein RALF-like 11 (72 aa).

The first 17 residues, 1-17 (MKAWLICLLVICAAVIA), serve as a signal peptide directing secretion. 2 cysteine pairs are disulfide-bonded: Cys-34–Cys-43 and Cys-63–Cys-69.

The protein belongs to the plant rapid alkalinization factor (RALF) family.

It localises to the secreted. Its function is as follows. Cell signaling peptide that may regulate plant stress, growth, and development. Mediates a rapid alkalinization of extracellular space by mediating a transient increase in the cytoplasmic Ca(2+) concentration leading to a calcium-dependent signaling events through a cell surface receptor and a concomitant activation of some intracellular mitogen-activated protein kinases. In Arabidopsis thaliana (Mouse-ear cress), this protein is Protein RALF-like 11 (RALFL11).